The sequence spans 309 residues: Taste receptor type 2 member 46 (309 aa).

A topological domain (extracellular) is located at residue Met-1. Residues 2–22 (ITFLPIIFSILIVVTFVIGNF) traverse the membrane as a helical segment. Residues 23 to 46 (ANGFIALANSIEWFKRQKISFADQ) lie on the Cytoplasmic side of the membrane. A helical transmembrane segment spans residues 47-67 (ILTALAVSRVGLLWVLLLNWY). Residues 68–86 (ATELNPAFYSIEVRITAYN) lie on the Extracellular side of the membrane. The helical transmembrane segment at 87-107 (LWAVINHFSNWLATSLSIFYL) threads the bilayer. Residues 108–126 (LKIANFSNLIFLCLKRRVK) lie on the Cytoplasmic side of the membrane. A helical membrane pass occupies residues 127 to 147 (SVVLVILLGPLLFLVCHLFVI). The Extracellular portion of the chain corresponds to 148–178 (NMNQIIWTKEYEGNMTWKIKLRSAMYLSNTT). 2 N-linked (GlcNAc...) asparagine glycosylation sites follow: Asn-161 and Asn-176. Residues 179 to 199 (VTILANLVPFTLTLISFLLLI) form a helical membrane-spanning segment. The Cytoplasmic portion of the chain corresponds to 200 to 229 (CSLCKHLEKMQLHGKGSQDPSMKVHIKALQ). A helical membrane pass occupies residues 230–250 (TVTSFLLLCAIYFLSIIMSVW). Residues 251-259 (SFESLENKP) are Extracellular-facing. The chain crosses the membrane as a helical span at residues 260 to 280 (VFMFCEAITFSYPSTHPFILI). At 281–309 (WGNKKLKQTFLSVLWHVRYWVKGEKPSXP) the chain is on the cytoplasmic side.

It belongs to the G-protein coupled receptor T2R family.

It localises to the membrane. The protein localises to the cell projection. Its subcellular location is the cilium membrane. Its function is as follows. Receptor that may play a role in the perception of bitterness and is gustducin-linked. May play a role in sensing the chemical composition of the gastrointestinal content. The activity of this receptor may stimulate alpha gustducin, mediate PLC-beta-2 activation and lead to the gating of TRPM5. In airway epithelial cells, binding of bitter compounds increases the intracellular calcium ion concentration and stimulates ciliary beat frequency. In Pan troglodytes (Chimpanzee), this protein is Taste receptor type 2 member 46 (TAS2R46).